Reading from the N-terminus, the 314-residue chain is MKLTFLGTGAAIPTKYRAHPSISLKFDGEIFLFDCGENTQRQIIFTDVSPMKINNIFISHLHGDHVLGIPGLLQSIAFQGRTKPLNIYGPEETAKMIKNILNVGYHSIDYPINVYEISSKTSEKIISTDNYDVFSFPVVHSVPAVAYVFRQVKKPRMDLEKVNKLGIEIGPDLKRLKDGYNVELNGKIITPEDVTLPPKKGICVGYSGDTIPLNEFADFLKELKCTILIHEATFDKTMDKNAKETLHSTVHDALNIAKRSGANTVILTHISARYDELSAFEKDVVEFKVEHPDLHVLIAEDLMEYSLKGKWVKM.

The Zn(2+) site is built by H60, H62, D64, H65, H140, D209, and H269. D64 acts as the Proton acceptor in catalysis.

It belongs to the RNase Z family. Homodimer. It depends on Zn(2+) as a cofactor.

The enzyme catalyses Endonucleolytic cleavage of RNA, removing extra 3' nucleotides from tRNA precursor, generating 3' termini of tRNAs. A 3'-hydroxy group is left at the tRNA terminus and a 5'-phosphoryl group is left at the trailer molecule.. Zinc phosphodiesterase, which displays some tRNA 3'-processing endonuclease activity. Probably involved in tRNA maturation, by removing a 3'-trailer from precursor tRNA. This chain is Ribonuclease Z, found in Methanococcus maripaludis (strain C5 / ATCC BAA-1333).